The primary structure comprises 450 residues: Flavin-containing monooxygenase FMO GS-OX-like 5 (450 aa).

17 to 22 is a binding site for FAD; that stretch reads GAGPAG. Residue 215–220 coordinates NADP(+); the sequence is GNSSSA.

It belongs to the FMO family. It depends on FAD as a cofactor.

Catalyzes the conversion of methylthioalkyl glucosinolates of any chain length into methylsulfinylalkyl glucosinolates. The chain is Flavin-containing monooxygenase FMO GS-OX-like 5 from Arabidopsis thaliana (Mouse-ear cress).